The sequence spans 330 residues: Putative ADP-ribosyl glycohydrolase L543 (330 aa).

Belongs to the ADP-ribosylglycohydrolase family.

The chain is Putative ADP-ribosyl glycohydrolase L543 from Acanthamoeba polyphaga mimivirus (APMV).